The sequence spans 207 residues: Outer-membrane lipoprotein LolB (207 aa).

Residues 1-21 form the signal peptide; that stretch reads MPTKTVRCLRLLPLASLLLAA. A lipid anchor (N-palmitoyl cysteine) is attached at cysteine 22. Cysteine 22 carries S-diacylglycerol cysteine lipidation.

This sequence belongs to the LolB family. As to quaternary structure, monomer.

It localises to the cell outer membrane. In terms of biological role, plays a critical role in the incorporation of lipoproteins in the outer membrane after they are released by the LolA protein. This chain is Outer-membrane lipoprotein LolB, found in Pectobacterium atrosepticum (strain SCRI 1043 / ATCC BAA-672) (Erwinia carotovora subsp. atroseptica).